Consider the following 394-residue polypeptide: MAKAKFERTKPHVNIGTIGHVDHGKTSLTAAITMVLAKTGGAQATAYDQIDAAPEEKERGITISTAHVEYETKNRHYAHVDCPGHADYVKNMITGAAQMDGAILVVSAADGPMPQTREHILLAKQVGVPAMVVFLNKVDMVDDSDLLELVEMEVRELLSKYGFPGDEIPIIKGSALQALEGKPEGEKAINELMDAVDSYIPQPVRATDKPFLMPIEDVFSISGRSTVVTGRVESGIIKVGEEIEIVGLKDTQKTTCTGVEMFRKLLDEGQAGDNVGILLRGTKREEVERGQVLAKPGSIKPHDKFEAEVYVLSKEEGGRHTPFTNDYRPQFYFRTTDVTGTIKLPADKQMVMPGDNATFTVELIKPIAMQEGLKFSIREGGRTVGAGVVTKINN.

The region spanning 10–204 (KPHVNIGTIG…AVDSYIPQPV (195 aa)) is the tr-type G domain. The interval 19–26 (GHVDHGKT) is G1. 19–26 (GHVDHGKT) lines the GTP pocket. Thr26 contributes to the Mg(2+) binding site. Residues 60–64 (GITIS) are G2. The interval 81–84 (DCPG) is G3. GTP contacts are provided by residues 81–85 (DCPGH) and 136–139 (NKVD). Residues 136-139 (NKVD) are G4. The tract at residues 174–176 (SAL) is G5.

It belongs to the TRAFAC class translation factor GTPase superfamily. Classic translation factor GTPase family. EF-Tu/EF-1A subfamily. In terms of assembly, monomer.

Its subcellular location is the cytoplasm. It catalyses the reaction GTP + H2O = GDP + phosphate + H(+). Functionally, GTP hydrolase that promotes the GTP-dependent binding of aminoacyl-tRNA to the A-site of ribosomes during protein biosynthesis. This Rickettsia montanensis protein is Elongation factor Tu.